Here is a 60-residue protein sequence, read N- to C-terminus: Temporin-MT5 (60 aa).

An N-terminal signal peptide occupies residues 1–22 (MFTLKKPLLLLFFLATINLSLC). Positions 23 to 44 (EQERNAEEERRDEPDERNAEVE) are cleaved as a propeptide — removed in mature form. Phenylalanine 58 bears the Phenylalanine amide mark.

The protein belongs to the frog skin active peptide (FSAP) family. Temporin subfamily. In terms of tissue distribution, expressed by the skin glands.

Its subcellular location is the secreted. In terms of biological role, antimicrobial peptide. This Amolops mantzorum (Sichuan torrent frog) protein is Temporin-MT5.